Reading from the N-terminus, the 489-residue chain is Probable transporter MCH1 (489 aa).

A run of 3 helical transmembrane segments spans residues 30-50 (IAYI…LISL), 68-88 (MIVT…GIIA), and 92-112 (GPIT…AYLA). An N-linked (GlcNAc...) asparagine glycan is attached at Asn123. The next 8 membrane-spanning stretches (helical) occupy residues 132-152 (TLVC…SALI), 163-183 (LLSI…GSQF), 202-222 (VFKA…IATS), 279-299 (VLYI…MFIA), 307-327 (VLAG…YALT), 351-371 (WILL…YMLS), 388-408 (FYIG…YPTI), and 421-441 (AYGT…LIYA). A glycan (N-linked (GlcNAc...) asparagine) is linked at Asn450. A helical transmembrane segment spans residues 462-482 (ETTALEFCAAILLTVVVTVLW).

This sequence belongs to the major facilitator superfamily.

It is found in the vacuole membrane. Its function is as follows. Probable transporter. The sequence is that of Probable transporter MCH1 (MCH1) from Candida glabrata (strain ATCC 2001 / BCRC 20586 / JCM 3761 / NBRC 0622 / NRRL Y-65 / CBS 138) (Yeast).